A 136-amino-acid chain; its full sequence is MNKWVFCWVTLCLLTVETTHGDGGIITQTPKFLIGQEGQKLTLKCQQNFNHDTMYWYRQDSGKGLRLIYYSITENDLQKGDLSEGYDASREKKSSFSLTVTSAQKNEMTVFLCASSIRLASAETLYFGSGTRLTVL.

Positions 1 to 21 (MNKWVFCWVTLCLLTVETTHG) are cleaved as a signal peptide. Residues 22–116 (DGGIITQTPK…EMTVFLCASS (95 aa)) form a v segment region. C45 and C113 are disulfide-bonded. Residues 117–120 (IRLA) are d segment. The segment at 121–136 (SAETLYFGSGTRLTVL) is j segment.

This is T-cell receptor beta chain V region LB2 from Mus musculus (Mouse).